The chain runs to 338 residues: Anthranilate phosphoribosyltransferase (338 aa).

5-phospho-alpha-D-ribose 1-diphosphate contacts are provided by residues Gly-83, 86–87 (GD), Ser-91, 93–96 (NCST), 111–119 (KHGNRAVSS), and Ala-123. Gly-83 contributes to the anthranilate binding site. Residue Ser-95 coordinates Mg(2+). Asn-114 is an anthranilate binding site. Residue Arg-169 participates in anthranilate binding. Mg(2+)-binding residues include Asp-228 and Glu-229.

It belongs to the anthranilate phosphoribosyltransferase family. Homodimer. Mg(2+) is required as a cofactor.

It carries out the reaction N-(5-phospho-beta-D-ribosyl)anthranilate + diphosphate = 5-phospho-alpha-D-ribose 1-diphosphate + anthranilate. It participates in amino-acid biosynthesis; L-tryptophan biosynthesis; L-tryptophan from chorismate: step 2/5. Functionally, catalyzes the transfer of the phosphoribosyl group of 5-phosphorylribose-1-pyrophosphate (PRPP) to anthranilate to yield N-(5'-phosphoribosyl)-anthranilate (PRA). This chain is Anthranilate phosphoribosyltransferase, found in Nitratidesulfovibrio vulgaris (strain DSM 19637 / Miyazaki F) (Desulfovibrio vulgaris).